Reading from the N-terminus, the 689-residue chain is Protein asunder (689 aa).

Residues N521–T550 are a coiled coil. 2 disordered regions span residues P592–R619 and G665–S689. Residues S599–K614 are compositionally biased toward low complexity. The short motif at L613 to R619 is the Nuclear localization signal (NLS) element.

This sequence belongs to the Integrator subunit 13 family. In terms of assembly, belongs to the multiprotein complex Integrator, at least composed of IntS1, IntS2, IntS3, IntS4, omd/IntS5, IntS6, defl/IntS7, IntS8, IntS9, IntS10, IntS11, IntS12, asun/IntS13, IntS14 and IntS15. The core complex associates with protein phosphatase 2A subunits mts/PP2A and Pp2A-29B, to form the Integrator-PP2A (INTAC) complex. Phosphorylated. Expressed in nurse cells at stages 9-10 of oogenesis and exported to the oocyte. Also expressed in the follicle cells surrounding the oocyte.

Its subcellular location is the nucleus. It localises to the cytoplasm. The protein localises to the perinuclear region. In terms of biological role, component of the integrator complex, a multiprotein complex that terminates RNA polymerase II (Pol II) transcription in the promoter-proximal region of genes. The integrator complex provides a quality checkpoint during transcription elongation by driving premature transcription termination of transcripts that are unfavorably configured for transcriptional elongation: the complex terminates transcription by (1) catalyzing dephosphorylation of the C-terminal domain (CTD) of Pol II subunit Polr2A/Rbp1 and Spt5, and (2) degrading the exiting nascent RNA transcript via endonuclease activity. The integrator complex is also involved in the 3'-end processing of the U7 snRNA, and also the spliceosomal snRNAs U1, U2, U4 and U5. Plays a role as a regulator of spermatogenesis. Crucial regulator of the mitotic cell cycle and development. Required for the correct dynein-dynactin perinuclear localization important for nucleus-centrosome coupling that occur upon meiotic progression of primary spermatocytes. Plays a role in sperm motility and fertility. May have a role in the PNG/PLU/GNU pathway. The protein is Protein asunder of Drosophila melanogaster (Fruit fly).